We begin with the raw amino-acid sequence, 372 residues long: Chloromuconate cycloisomerase (372 aa).

Lys158 serves as the catalytic Proton acceptor. Mn(2+)-binding residues include Asp187, Glu213, and Asp238. Glu316 serves as the catalytic Proton donor.

It belongs to the mandelate racemase/muconate lactonizing enzyme family. Mn(2+) is required as a cofactor.

The enzyme catalyses 2-[(2R)-2-chloro-2,5-dihydro-5-oxofuryl]acetate = 3-chloro-cis,cis-muconate + H(+). Its pathway is aromatic compound metabolism; 3-chlorocatechol degradation. The sequence is that of Chloromuconate cycloisomerase (tfdDII) from Cupriavidus pinatubonensis (strain JMP 134 / LMG 1197) (Cupriavidus necator (strain JMP 134)).